Reading from the N-terminus, the 156-residue chain is VapC ribonuclease AF_1683 (156 aa).

A PINc domain is found at 4-125; it reads LIDTGIFFGF…KLISYDSRFS (122 aa). Residues Asp6 and Asp103 each coordinate Mg(2+).

This sequence belongs to the PINc/VapC protein family. Requires Mg(2+) as cofactor.

Functionally, toxic component of a type II toxin-antitoxin (TA) system. An RNase. This is VapC ribonuclease AF_1683 from Archaeoglobus fulgidus (strain ATCC 49558 / DSM 4304 / JCM 9628 / NBRC 100126 / VC-16).